The primary structure comprises 120 residues: Large ribosomal subunit protein uL18 (120 aa).

Belongs to the universal ribosomal protein uL18 family. Part of the 50S ribosomal subunit; part of the 5S rRNA/L5/L18/L25 subcomplex. Contacts the 5S and 23S rRNAs.

In terms of biological role, this is one of the proteins that bind and probably mediate the attachment of the 5S RNA into the large ribosomal subunit, where it forms part of the central protuberance. The polypeptide is Large ribosomal subunit protein uL18 (Bacillus cereus (strain G9842)).